The following is a 351-amino-acid chain: Probable inactive tRNA-specific adenosine deaminase-like protein 3 (351 aa).

The residue at position 1 (M1) is an N-acetylmethionine. Residues 1-26 (MEPAPGLVEQPKCLEAGSPEPEPAPW) form a disordered region. Positions 171-336 (AAMQSHMERA…PDLNHRFQVF (166 aa)) constitute a CMP/dCMP-type deaminase domain. The Zn(2+) site is built by H223, C291, and C294.

Belongs to the cytidine and deoxycytidylate deaminase family. ADAT3 subfamily. The cofactor is Zn(2+).

The sequence is that of Probable inactive tRNA-specific adenosine deaminase-like protein 3 (ADAT3) from Homo sapiens (Human).